The primary structure comprises 679 residues: Glycine--tRNA ligase beta subunit (679 aa).

This sequence belongs to the class-II aminoacyl-tRNA synthetase family. In terms of assembly, tetramer of two alpha and two beta subunits.

Its subcellular location is the cytoplasm. The catalysed reaction is tRNA(Gly) + glycine + ATP = glycyl-tRNA(Gly) + AMP + diphosphate. This chain is Glycine--tRNA ligase beta subunit, found in Streptococcus pyogenes serotype M6 (strain ATCC BAA-946 / MGAS10394).